A 248-amino-acid polypeptide reads, in one-letter code: Probable transcriptional regulatory protein FTM_1203 (248 aa).

It belongs to the TACO1 family.

The protein localises to the cytoplasm. The polypeptide is Probable transcriptional regulatory protein FTM_1203 (Francisella tularensis subsp. mediasiatica (strain FSC147)).